We begin with the raw amino-acid sequence, 709 residues long: Polyribonucleotide nucleotidyltransferase (709 aa).

Mg(2+) contacts are provided by aspartate 486 and aspartate 492. A KH domain is found at 553-612 (PRIHTIKINADKIKDVIGKGGSVIRALTEETGTTIEIEDDGTVKIAATSGEQAKQAIARI). In terms of domain architecture, S1 motif spans 622 to 690 (GRIYNGKVTR…RQGRIRLSMK (69 aa)). The disordered stretch occupies residues 690 to 709 (KEAQATQQEAAETSSEDPAN). Positions 691-702 (EAQATQQEAAET) are enriched in low complexity.

Belongs to the polyribonucleotide nucleotidyltransferase family. In terms of assembly, component of the RNA degradosome, which is a multiprotein complex involved in RNA processing and mRNA degradation. Requires Mg(2+) as cofactor.

It localises to the cytoplasm. It catalyses the reaction RNA(n+1) + phosphate = RNA(n) + a ribonucleoside 5'-diphosphate. Involved in mRNA degradation. Catalyzes the phosphorolysis of single-stranded polyribonucleotides processively in the 3'- to 5'-direction. In Proteus mirabilis (strain HI4320), this protein is Polyribonucleotide nucleotidyltransferase.